The sequence spans 382 residues: ATP phosphoribosyltransferase regulatory subunit (382 aa).

Belongs to the class-II aminoacyl-tRNA synthetase family. HisZ subfamily. Heteromultimer composed of HisG and HisZ subunits.

Its subcellular location is the cytoplasm. It functions in the pathway amino-acid biosynthesis; L-histidine biosynthesis; L-histidine from 5-phospho-alpha-D-ribose 1-diphosphate: step 1/9. Required for the first step of histidine biosynthesis. May allow the feedback regulation of ATP phosphoribosyltransferase activity by histidine. This Burkholderia thailandensis (strain ATCC 700388 / DSM 13276 / CCUG 48851 / CIP 106301 / E264) protein is ATP phosphoribosyltransferase regulatory subunit.